Consider the following 473-residue polypeptide: Suppressor of SWI4 1 homolog (473 aa).

Positions 29-292 constitute a Brix domain; the sequence is PHSFVFTRGC…LIKVQEGVGE (264 aa). Phosphoserine occurs at positions 238 and 240. Positions 323-473 are disordered; sequence AQRQAQQAQN…GRGRPGKRVA (151 aa). A compositionally biased stretch (low complexity) spans 324 to 334; that stretch reads QRQAQQAQNVQ. The segment covering 335–352 has biased composition (basic and acidic residues); the sequence is RKQEQREAHRKKSLEGMK. Residue S359 is modified to Phosphoserine. Positions 375-388 are enriched in acidic residues; the sequence is LGEDDDEQEDDDIE. A compositionally biased stretch (basic residues) spans 409-421; that stretch reads KRLAKSPGRKRKR. The segment covering 422–443 has biased composition (basic and acidic residues); that stretch reads WEMDRGRGRLCDQKFPKTKDKS. Residue K438 is modified to N6-acetyllysine. Basic residues predominate over residues 462-473; that stretch reads GRGRGRPGKRVA.

As to expression, widely expressed.

The protein resides in the nucleus. The protein localises to the nucleolus. Functionally, may have a role in cell growth. The chain is Suppressor of SWI4 1 homolog (PPAN) from Homo sapiens (Human).